Here is a 332-residue protein sequence, read N- to C-terminus: Beta-ketoacyl-[acyl-carrier-protein] synthase III (332 aa).

Residues C116 and H257 contribute to the active site. An ACP-binding region spans residues 258–262 (QANQR). N287 is an active-site residue.

This sequence belongs to the thiolase-like superfamily. FabH family. In terms of assembly, homodimer.

Its subcellular location is the cytoplasm. It catalyses the reaction malonyl-[ACP] + acetyl-CoA + H(+) = 3-oxobutanoyl-[ACP] + CO2 + CoA. Its pathway is lipid metabolism; fatty acid biosynthesis. In terms of biological role, catalyzes the condensation reaction of fatty acid synthesis by the addition to an acyl acceptor of two carbons from malonyl-ACP. Catalyzes the first condensation reaction which initiates fatty acid synthesis and may therefore play a role in governing the total rate of fatty acid production. Possesses both acetoacetyl-ACP synthase and acetyl transacylase activities. Its substrate specificity determines the biosynthesis of branched-chain and/or straight-chain of fatty acids. The chain is Beta-ketoacyl-[acyl-carrier-protein] synthase III from Acaryochloris marina (strain MBIC 11017).